The chain runs to 524 residues: Alanine aminotransferase 2 (524 aa).

At lysine 342 the chain carries N6-(pyridoxal phosphate)lysine.

Belongs to the class-I pyridoxal-phosphate-dependent aminotransferase family. Alanine aminotransferase subfamily. Homodimer. The cofactor is pyridoxal 5'-phosphate.

It carries out the reaction L-alanine + 2-oxoglutarate = pyruvate + L-glutamate. It participates in amino-acid degradation; L-alanine degradation via transaminase pathway; pyruvate from L-alanine: step 1/1. In terms of biological role, catalyzes the reversible transamination between alanine and 2-oxoglutarate to form pyruvate and glutamate. This chain is Alanine aminotransferase 2 (gpt2), found in Xenopus tropicalis (Western clawed frog).